The primary structure comprises 426 residues: Serine--tRNA ligase (426 aa).

Residue 235-237 (TAE) coordinates L-serine. ATP is bound at residue 266–268 (RRE). An L-serine-binding site is contributed by Glu289. 353 to 356 (EISS) is an ATP binding site. L-serine is bound at residue Ser389.

The protein belongs to the class-II aminoacyl-tRNA synthetase family. Type-1 seryl-tRNA synthetase subfamily. In terms of assembly, homodimer. The tRNA molecule binds across the dimer.

The protein localises to the cytoplasm. The catalysed reaction is tRNA(Ser) + L-serine + ATP = L-seryl-tRNA(Ser) + AMP + diphosphate + H(+). It catalyses the reaction tRNA(Sec) + L-serine + ATP = L-seryl-tRNA(Sec) + AMP + diphosphate + H(+). It functions in the pathway aminoacyl-tRNA biosynthesis; selenocysteinyl-tRNA(Sec) biosynthesis; L-seryl-tRNA(Sec) from L-serine and tRNA(Sec): step 1/1. Its function is as follows. Catalyzes the attachment of serine to tRNA(Ser). Is also able to aminoacylate tRNA(Sec) with serine, to form the misacylated tRNA L-seryl-tRNA(Sec), which will be further converted into selenocysteinyl-tRNA(Sec). This chain is Serine--tRNA ligase, found in Trichormus variabilis (strain ATCC 29413 / PCC 7937) (Anabaena variabilis).